A 458-amino-acid chain; its full sequence is tRNA modification GTPase MnmE (458 aa).

Positions 26, 88, and 127 each coordinate (6S)-5-formyl-5,6,7,8-tetrahydrofolate. The TrmE-type G domain occupies 224–378 (GLSTAIIGRP…IEDRINQLFF (155 aa)). Asn-234 lines the K(+) pocket. GTP is bound by residues 234-239 (NVGKSS), 253-259 (TDIAGTT), and 278-281 (DTAG). Ser-238 lines the Mg(2+) pocket. Positions 253, 255, and 258 each coordinate K(+). Thr-259 contributes to the Mg(2+) binding site. Lys-458 contacts (6S)-5-formyl-5,6,7,8-tetrahydrofolate.

Belongs to the TRAFAC class TrmE-Era-EngA-EngB-Septin-like GTPase superfamily. TrmE GTPase family. In terms of assembly, homodimer. Heterotetramer of two MnmE and two MnmG subunits. K(+) is required as a cofactor.

The protein localises to the cytoplasm. Exhibits a very high intrinsic GTPase hydrolysis rate. Involved in the addition of a carboxymethylaminomethyl (cmnm) group at the wobble position (U34) of certain tRNAs, forming tRNA-cmnm(5)s(2)U34. This chain is tRNA modification GTPase MnmE, found in Streptococcus pyogenes serotype M1.